The sequence spans 278 residues: MLCLTRLRANVNKVAFMEMVKDLRFRTEAPIAECGAALKETHGDVEKAMEVLRKKGAARAMKKRSRVTEHGSVVACVGGLFGAAVITVCSETDFAARSAQFQNTCARVKVALQRKIIDSKGDVLTNPTEAHRSLVEATAEDIRSSIAVLGENVTIKSVESLRLAPHVAEHISIGSYTHGSLDVPDVGRIAGVVAVSRLDPTKEVQASTLTDVARHFVASSGAEGNYAHQNFFGTEETVGQWLKRHGLCFSSSLVVDFGKEPITHTASQPRNAVKHPEG.

This sequence belongs to the EF-Ts family.

It localises to the mitochondrion. In terms of biological role, associates with the EF-Tu.GDP complex and induces the exchange of GDP to GTP. It remains bound to the aminoacyl-tRNA.EF-Tu.GTP complex up to the GTP hydrolysis stage on the ribosome. This Trypanosoma cruzi (strain CL Brener) protein is Elongation factor Ts 1, mitochondrial.